Consider the following 280-residue polypeptide: Homeobox protein Hox-B1b (280 aa).

Positions 46–65 (GRLAAPTSAPHQSPGLPLHH) are disordered. An Antp-type hexapeptide motif is present at residues 170–175 (TFDWMK). A DNA-binding region (homeobox) is located at residues 195–254 (HNVIRTNFTTKQLTELEKEFHFNKYLTRARRVEVAASLELNETQVKIWFQNRRMKQKKRE). The disordered stretch occupies residues 249–280 (KQKKREKLGGVLVHREKASGPESSPKAKESEP). Basic and acidic residues predominate over residues 261–280 (VHREKASGPESSPKAKESEP).

Belongs to the Antp homeobox family. Labial subfamily.

It is found in the nucleus. Its function is as follows. Sequence-specific transcription factor which is part of a developmental regulatory system that provides cells with specific positional identities on the anterior-posterior axis. The protein is Homeobox protein Hox-B1b (hoxb1b) of Takifugu rubripes (Japanese pufferfish).